The following is a 391-amino-acid chain: GTPase Obg (391 aa).

Residues 1–159 (MKFVDEASIL…RDLLLELMLL (159 aa)) form the Obg domain. The interval 127–147 (NTRFKSSVNRTPRQKTNGTPG) is disordered. Positions 129 to 145 (RFKSSVNRTPRQKTNGT) are enriched in polar residues. Residues 160-333 (ADVGMLGMPN…LCWDVMTFII (174 aa)) enclose the OBG-type G domain. Residues 166–173 (GMPNAGKS), 191–195 (FTTLV), 213–216 (DIPG), 283–286 (NKID), and 314–316 (SAA) each bind GTP. Mg(2+)-binding residues include Ser173 and Thr193.

It belongs to the TRAFAC class OBG-HflX-like GTPase superfamily. OBG GTPase family. In terms of assembly, monomer. Mg(2+) serves as cofactor.

It localises to the cytoplasm. Functionally, an essential GTPase which binds GTP, GDP and possibly (p)ppGpp with moderate affinity, with high nucleotide exchange rates and a fairly low GTP hydrolysis rate. Plays a role in control of the cell cycle, stress response, ribosome biogenesis and in those bacteria that undergo differentiation, in morphogenesis control. The protein is GTPase Obg of Salmonella arizonae (strain ATCC BAA-731 / CDC346-86 / RSK2980).